Reading from the N-terminus, the 150-residue chain is Large ribosomal subunit protein bL9 (150 aa).

Belongs to the bacterial ribosomal protein bL9 family.

Its function is as follows. Binds to the 23S rRNA. This Limosilactobacillus reuteri (strain DSM 20016) (Lactobacillus reuteri) protein is Large ribosomal subunit protein bL9.